We begin with the raw amino-acid sequence, 146 residues long: Large ribosomal subunit protein bL21 (146 aa).

Positions 103-146 are disordered; the sequence is DGKSPTIGPRPKKEKAVEPVEGASDDKPRRAAKKTAAKTAEDAD. The span at 116-131 shows a compositional bias: basic and acidic residues; it reads EKAVEPVEGASDDKPR.

This sequence belongs to the bacterial ribosomal protein bL21 family. As to quaternary structure, part of the 50S ribosomal subunit. Contacts protein L20.

Functionally, this protein binds to 23S rRNA in the presence of protein L20. In Nitrobacter winogradskyi (strain ATCC 25391 / DSM 10237 / CIP 104748 / NCIMB 11846 / Nb-255), this protein is Large ribosomal subunit protein bL21.